A 186-amino-acid polypeptide reads, in one-letter code: Ribosome-recycling factor (186 aa).

This sequence belongs to the RRF family.

The protein localises to the cytoplasm. In terms of biological role, responsible for the release of ribosomes from messenger RNA at the termination of protein biosynthesis. May increase the efficiency of translation by recycling ribosomes from one round of translation to another. The polypeptide is Ribosome-recycling factor (Rickettsia prowazekii (strain Madrid E)).